We begin with the raw amino-acid sequence, 130 residues long: Small ribosomal subunit protein uS9 (130 aa).

It belongs to the universal ribosomal protein uS9 family.

The chain is Small ribosomal subunit protein uS9 from Aromatoleum aromaticum (strain DSM 19018 / LMG 30748 / EbN1) (Azoarcus sp. (strain EbN1)).